A 336-amino-acid polypeptide reads, in one-letter code: Phospho-N-acetylmuramoyl-pentapeptide-transferase (336 aa).

10 helical membrane passes run 3–23 (LTLI…PYFI), 53–73 (GGTV…LFSI), 78–98 (SLAL…IGFL), 118–138 (LALQ…PSGI), 143–163 (VFGY…FWVV), 174–194 (GIDG…GVIA), 200–220 (FDVL…FCFN), 226–246 (VFMG…ISIA), 251–271 (WTLL…MLQV), and 316–336 (AFLW…LYVF).

It belongs to the glycosyltransferase 4 family. MraY subfamily. Mg(2+) is required as a cofactor.

Its subcellular location is the cell membrane. The catalysed reaction is UDP-N-acetyl-alpha-D-muramoyl-L-alanyl-gamma-D-glutamyl-L-lysyl-D-alanyl-D-alanine + di-trans,octa-cis-undecaprenyl phosphate = Mur2Ac(oyl-L-Ala-gamma-D-Glu-L-Lys-D-Ala-D-Ala)-di-trans,octa-cis-undecaprenyl diphosphate + UMP. It functions in the pathway cell wall biogenesis; peptidoglycan biosynthesis. In terms of biological role, catalyzes the initial step of the lipid cycle reactions in the biosynthesis of the cell wall peptidoglycan: transfers peptidoglycan precursor phospho-MurNAc-pentapeptide from UDP-MurNAc-pentapeptide onto the lipid carrier undecaprenyl phosphate, yielding undecaprenyl-pyrophosphoryl-MurNAc-pentapeptide, known as lipid I. The chain is Phospho-N-acetylmuramoyl-pentapeptide-transferase from Streptococcus pyogenes serotype M4 (strain MGAS10750).